The primary structure comprises 94 residues: Aspartyl/glutamyl-tRNA(Asn/Gln) amidotransferase subunit C (94 aa).

Belongs to the GatC family. Heterotrimer of A, B and C subunits.

It catalyses the reaction L-glutamyl-tRNA(Gln) + L-glutamine + ATP + H2O = L-glutaminyl-tRNA(Gln) + L-glutamate + ADP + phosphate + H(+). The enzyme catalyses L-aspartyl-tRNA(Asn) + L-glutamine + ATP + H2O = L-asparaginyl-tRNA(Asn) + L-glutamate + ADP + phosphate + 2 H(+). In terms of biological role, allows the formation of correctly charged Asn-tRNA(Asn) or Gln-tRNA(Gln) through the transamidation of misacylated Asp-tRNA(Asn) or Glu-tRNA(Gln) in organisms which lack either or both of asparaginyl-tRNA or glutaminyl-tRNA synthetases. The reaction takes place in the presence of glutamine and ATP through an activated phospho-Asp-tRNA(Asn) or phospho-Glu-tRNA(Gln). This chain is Aspartyl/glutamyl-tRNA(Asn/Gln) amidotransferase subunit C, found in Solidesulfovibrio magneticus (strain ATCC 700980 / DSM 13731 / RS-1) (Desulfovibrio magneticus).